The sequence spans 223 residues: MRCAHAPAPRTRYPTRAPSGPRPPSRSQAQTPPRSVPRLRPRHRHPQDPRSPGPAPRHRRPPRPDPRAPPARASYRRFRTWPSATSWERRRLSPGHRALARGPPARLGGEGPGAGDRRREGPDRSPRQPPVLPAAAAQPDSSSAQAPGPSTLRPAATARRKRRWATRGPAHPAFARAHGEAGAGRVRTSARAGSTCAGWALWRCALRWAERQVGALGAESRFP.

Residues 1–19 are compositionally biased toward low complexity; the sequence is MRCAHAPAPRTRYPTRAPS. Residues 1-184 are disordered; sequence MRCAHAPAPR…ARAHGEAGAG (184 aa). The span at 115-126 shows a compositional bias: basic and acidic residues; sequence GDRRREGPDRSP. The segment covering 133 to 157 has biased composition (low complexity); it reads PAAAAQPDSSSAQAPGPSTLRPAAT.

The chain is Putative HTLV-1-related endogenous sequence (HRES1) from Homo sapiens (Human).